The following is a 116-amino-acid chain: Ribonuclease P protein component (116 aa).

The protein belongs to the RnpA family. In terms of assembly, consists of a catalytic RNA component (M1 or rnpB) and a protein subunit.

The enzyme catalyses Endonucleolytic cleavage of RNA, removing 5'-extranucleotides from tRNA precursor.. In terms of biological role, RNaseP catalyzes the removal of the 5'-leader sequence from pre-tRNA to produce the mature 5'-terminus. It can also cleave other RNA substrates such as 4.5S RNA. The protein component plays an auxiliary but essential role in vivo by binding to the 5'-leader sequence and broadening the substrate specificity of the ribozyme. The protein is Ribonuclease P protein component of Exiguobacterium sibiricum (strain DSM 17290 / CCUG 55495 / CIP 109462 / JCM 13490 / 255-15).